We begin with the raw amino-acid sequence, 573 residues long: MLO-like protein 11 (573 aa).

The Extracellular segment spans residues M1–A19. Residues L20–V40 form a helical membrane-spanning segment. At E41–E69 the chain is on the cytoplasmic side. A helical membrane pass occupies residues L70 to I90. At C91–R163 the chain is on the extracellular side. Residues F164–I184 traverse the membrane as a helical segment. Topologically, residues V185–R287 are cytoplasmic. The next 2 membrane-spanning stretches (helical) occupy residues I288 to K308 and G309 to A329. At K330–S371 the chain is on the cytoplasmic side. The chain crosses the membrane as a helical span at residues L372–W392. At Q393–L411 the chain is on the extracellular side. A helical transmembrane segment spans residues L412–V432. Over T433–V573 the chain is Cytoplasmic. The calmodulin-binding stretch occupies residues Q446–L467. Disordered stretches follow at residues E500–R532 and R554–V573. Over residues E507–Q516 the composition is skewed to low complexity. Polar residues predominate over residues L561–V573.

The protein belongs to the MLO family.

The protein localises to the membrane. In terms of biological role, may be involved in modulation of pathogen defense and leaf cell death. Activity seems to be regulated by Ca(2+)-dependent calmodulin binding and seems not to require heterotrimeric G proteins. The chain is MLO-like protein 11 (MLO11) from Arabidopsis thaliana (Mouse-ear cress).